Reading from the N-terminus, the 27-residue chain is C-reactive protein P1 (27 aa).

The segment at Ile-1 to Lys-27 is disordered. A Pentraxin (PTX) domain is found at Ser-6–Lys-27.

It belongs to the pentraxin family. Homopentamer. Pentraxin (or pentaxin) have a discoid arrangement of 5 non-covalently bound subunits. Exists as a dimer under reducing conditions. Ca(2+) is required as a cofactor. In terms of processing, glycosylated.

The protein resides in the secreted. In terms of biological role, displays several functions associated with host defense: it promotes agglutination, bacterial capsular swelling, phagocytosis, and complement fixation through its calcium-dependent binding to phosphorylcholine. The sequence is that of C-reactive protein P1 from Gadus morhua (Atlantic cod).